The chain runs to 416 residues: Formyl-CoA:oxalate CoA-transferase (416 aa).

CoA-binding positions include glutamine 17–serine 18, arginine 38, leucine 72–lysine 75, asparagine 96–histidine 98, histidine 104, and lysine 137–glutamate 140. Aspartate 169 (nucleophile) is an active-site residue. Glycine 248–glutamine 250 provides a ligand contact to substrate. Glutamine 273–glutamine 275 is a CoA binding site.

Belongs to the CoA-transferase III family. Frc subfamily. In terms of assembly, homodimer.

It carries out the reaction formyl-CoA + oxalate = oxalyl-CoA + formate. The protein operates within metabolic intermediate degradation; oxalate degradation; CO(2) and formate from oxalate: step 1/2. Involved in the catabolism of oxalate and in the adapatation to low pH via the induction of the oxalate-dependent acid tolerance response (ATR). Catalyzes the transfer of the CoA moiety from formyl-CoA to oxalate. The sequence is that of Formyl-CoA:oxalate CoA-transferase from Escherichia coli (strain ATCC 8739 / DSM 1576 / NBRC 3972 / NCIMB 8545 / WDCM 00012 / Crooks).